Consider the following 330-residue polypeptide: Fructose-1,6-bisphosphatase class 1 (330 aa).

4 residues coordinate Mg(2+): Glu84, Asp103, Leu105, and Asp106. Substrate-binding positions include 106-109 (DGSS), Asn196, and Lys262. Glu268 serves as a coordination point for Mg(2+).

The protein belongs to the FBPase class 1 family. Homotetramer. Mg(2+) is required as a cofactor.

Its subcellular location is the cytoplasm. It catalyses the reaction beta-D-fructose 1,6-bisphosphate + H2O = beta-D-fructose 6-phosphate + phosphate. It participates in carbohydrate biosynthesis; gluconeogenesis. The chain is Fructose-1,6-bisphosphatase class 1 from Shewanella sp. (strain W3-18-1).